A 123-amino-acid polypeptide reads, in one-letter code: Large ribosomal subunit protein uL14 (123 aa).

Belongs to the universal ribosomal protein uL14 family. In terms of assembly, part of the 50S ribosomal subunit. Forms a cluster with proteins L3 and L19. In the 70S ribosome, L14 and L19 interact and together make contacts with the 16S rRNA in bridges B5 and B8.

Functionally, binds to 23S rRNA. Forms part of two intersubunit bridges in the 70S ribosome. This is Large ribosomal subunit protein uL14 from Proteus mirabilis (strain HI4320).